Here is a 472-residue protein sequence, read N- to C-terminus: DEAD-box ATP-dependent RNA helicase 58, chloroplastic (472 aa).

Residues 1-54 constitute a chloroplast transit peptide; sequence MASQLLNVPHLAFFPKISYASVFSTLKPSFFHSTSTRRALKSSPSSRIINLQAV. The Q motif signature appears at 76 to 104; that stretch reads RQICQGFVPEHILHRMEEIGFVFPTDIQR. The Helicase ATP-binding domain occupies 107–286; it reads LPTLFTGRDC…DCIQQKWTKR (180 aa). An ATP-binding site is contributed by 120–127; that stretch reads AQTGSGKT. The DEAD box motif lies at 231–234; sequence DEVD. A Helicase C-terminal domain is found at 314-472; it reads NKHQVLLALL…LMFSCEEMML (159 aa).

The protein belongs to the DEAD box helicase family.

It localises to the plastid. It is found in the chloroplast. It catalyses the reaction ATP + H2O = ADP + phosphate + H(+). The chain is DEAD-box ATP-dependent RNA helicase 58, chloroplastic (RH58) from Arabidopsis thaliana (Mouse-ear cress).